A 967-amino-acid chain; its full sequence is Phosphoenolpyruvate carboxylase 1 (967 aa).

Position 11 is a phosphoserine (serine 11). Active-site residues include histidine 173 and lysine 602. Serine 704 carries the post-translational modification Phosphoserine.

Belongs to the PEPCase type 1 family. In terms of assembly, homotetramer. It depends on Mg(2+) as a cofactor. Mn(2+) serves as cofactor. Post-translationally, the phosphorylation of Ser-11 is reversibly promoted by inorganic phosphate (Pi) deprivation. Enhanced activity by phosphorylation at pH 7.3 by lowering Km and sensitivity to inhibition by L-malate and L-aspartate, while enhancing activation by glucose 6-phosphate. Expressed in all plant organs, with higher levels in roots.

It is found in the cytoplasm. It catalyses the reaction oxaloacetate + phosphate = phosphoenolpyruvate + hydrogencarbonate. By light-reversible phosphorylation. Activated by inorganic phosphate (Pi) deprivation and glucose 6-phosphate. Inhibited by L-malate and L-aspartate. Functionally, through the carboxylation of phosphoenolpyruvate (PEP) it forms oxaloacetate, a four-carbon dicarboxylic acid source for the tricarboxylic acid cycle. Contributes probably to the adaptation to inorganic phosphate (Pi) deprivation. This is Phosphoenolpyruvate carboxylase 1 (PPC1) from Arabidopsis thaliana (Mouse-ear cress).